Here is a 219-residue protein sequence, read N- to C-terminus: Ribose-5-phosphate isomerase A (219 aa).

Substrate-binding positions include Thr28–Thr31, Asp81–Asp84, and Lys94–Gly97. Glu103 (proton acceptor) is an active-site residue. Lys121 is a binding site for substrate.

The protein belongs to the ribose 5-phosphate isomerase family. In terms of assembly, homodimer.

The catalysed reaction is aldehydo-D-ribose 5-phosphate = D-ribulose 5-phosphate. Its pathway is carbohydrate degradation; pentose phosphate pathway; D-ribose 5-phosphate from D-ribulose 5-phosphate (non-oxidative stage): step 1/1. In terms of biological role, catalyzes the reversible conversion of ribose-5-phosphate to ribulose 5-phosphate. The polypeptide is Ribose-5-phosphate isomerase A (Shewanella loihica (strain ATCC BAA-1088 / PV-4)).